Consider the following 627-residue polypeptide: uncharacterized protein (627 aa).

Topologically, residues 1-32 (MVDDSNYLTPHETALAVVATAMKKARLQLDTL) are extracellular. A helical transmembrane segment spans residues 33–53 (LINSILGGVLFSSGSFLLVAV). At 54–66 (YSEDPDIVARNPG) the chain is on the cytoplasmic side. A helical transmembrane segment spans residues 67-87 (IVNLITGVNFAMGLFYVVMMG). Residues 88–113 (ADLFNSNILFFSVGVLRKAVTIYDLM) lie on the Extracellular side of the membrane. Residues 114–134 (ISWVVSWLGNIAGSLFVSYLF) form a helical membrane-spanning segment. Residues 135 to 165 (GHLSGISSQKLWIIGSRQIIEQKVSYSFVQT) are Cytoplasmic-facing. A helical transmembrane segment spans residues 166-186 (FLKGIACNFFVCLAIYLQLMA). Residues 187 to 192 (KPIHVK) lie on the Extracellular side of the membrane. A helical transmembrane segment spans residues 193-213 (FILMSFPIIDFIGIGFTHVVG). The Cytoplasmic segment spans residues 214–218 (DMSAS). Residues 219 to 239 (FIAMLNGANVSVGKYIWKLLI) form a helical membrane-spanning segment. At 240-245 (PASLGN) the chain is on the extracellular side. A helical membrane pass occupies residues 246 to 266 (IVGGLFFSAVVPFYLHLVVVE). At 267-627 (RDRKRLSLPE…FYNRHTSPQL (361 aa)) the chain is on the cytoplasmic side. T305 is modified (phosphothreonine). Residues 512–537 (PPILPRTTQDTFPHNAPASSPAYTDD) are disordered. A compositionally biased stretch (polar residues) spans 517 to 533 (RTTQDTFPHNAPASSPA). S546 bears the Phosphoserine mark. T588 is modified (phosphothreonine). Over residues 605 to 614 (STTRRQKITE) the composition is skewed to basic and acidic residues. Residues 605-627 (STTRRQKITEPKNFYNRHTSPQL) are disordered.

Belongs to the FNT transporter (TC 1.A.16) family.

Its subcellular location is the membrane. This is an uncharacterized protein from Saccharomyces cerevisiae (strain ATCC 204508 / S288c) (Baker's yeast).